The chain runs to 247 residues: Proteasome subunit alpha type-7 (247 aa).

It belongs to the peptidase T1A family. In terms of assembly, the 26S proteasome consists of a 20S proteasome core and two 19S regulatory subunits. The 20S proteasome core is composed of 28 subunits that are arranged in four stacked rings, resulting in a barrel-shaped structure. The two end rings are each formed by seven alpha subunits, and the two central rings are each formed by seven beta subunits. The catalytic chamber with the active sites is on the inside of the barrel.

The protein localises to the cytoplasm. The protein resides in the nucleus. The proteasome is a multicatalytic proteinase complex which is characterized by its ability to cleave peptides with Arg, Phe, Tyr, Leu, and Glu adjacent to the leaving group at neutral or slightly basic pH. The proteasome has an ATP-dependent proteolytic activity. The chain is Proteasome subunit alpha type-7 (PSA4) from Trypanosoma brucei brucei.